We begin with the raw amino-acid sequence, 270 residues long: tRNA pseudouridine synthase A (270 aa).

Catalysis depends on aspartate 52, which acts as the Nucleophile. Tyrosine 110 provides a ligand contact to substrate.

The protein belongs to the tRNA pseudouridine synthase TruA family. Homodimer.

The catalysed reaction is uridine(38/39/40) in tRNA = pseudouridine(38/39/40) in tRNA. Functionally, formation of pseudouridine at positions 38, 39 and 40 in the anticodon stem and loop of transfer RNAs. This chain is tRNA pseudouridine synthase A, found in Paraburkholderia phytofirmans (strain DSM 17436 / LMG 22146 / PsJN) (Burkholderia phytofirmans).